A 511-amino-acid chain; its full sequence is Acidic amino acid decarboxylase GADL1 (511 aa).

Residue K323 is modified to N6-(pyridoxal phosphate)lysine.

The protein belongs to the group II decarboxylase family. As to quaternary structure, homodimer. The cofactor is pyridoxal 5'-phosphate.

The catalysed reaction is L-aspartate + H(+) = beta-alanine + CO2. It carries out the reaction 3-sulfino-L-alanine + H(+) = hypotaurine + CO2. Functionally, catalyzes the decarboxylation of L-aspartate, 3-sulfino-L-alanine (cysteine sulfinic acid), and L-cysteate to beta-alanine, hypotaurine and taurine, respectively. The preferred substrate is L-aspartate. Does not exhibit any decarboxylation activity toward glutamate. This is Acidic amino acid decarboxylase GADL1 (gadl1) from Xenopus tropicalis (Western clawed frog).